Consider the following 653-residue polypeptide: E3 ubiquitin-protein ligase TRIM32 (653 aa).

Alanine 2 is subject to N-acetylalanine. Residues 20 to 65 form an RING-type zinc finger; the sequence is CPICMESFTEEQLRPKLLHCGHTICRQCLEKLLASSINGVRCPFCS. At serine 55 the chain carries Phosphoserine; by CHEK2. Positions 100, 103, 123, and 128 each coordinate Zn(2+). The B box-type zinc-finger motif lies at 103–133; the sequence is CGRRLPRQFCRSCGLVLCEPCREADHQPPGH. A coiled-coil region spans residues 138 to 197; that stretch reads VKEAAEERRRDFGEKLTRLRELMGELQRRKAALEGVSKDLQARYKAVLQEYGHEERRVQD. A phosphoserine mark is found at serine 328, serine 335, and serine 339. NHL repeat units follow at residues 358 to 401, 415 to 458, 459 to 499, 562 to 605, and 606 to 646; these read LKKM…FTRK, DSFV…YTLD, GHCV…FTVD, GRQI…FPKG, and GGYS…YSYH.

It belongs to the TRIM/RBCC family. It self-associates. Interacts with DTNBP1. Interacts with PIAS4/PIASY upon treatment with UVB and TNF-alpha. Interacts with AMBRA1; promoting activation of ULK1 through unanchored 'Lys-63'-linked polyubiquitin chains. Interacts with TICAM1 and TAX1BP1; these interactions target TICAM1 to TAX1BP1-mediated selective autophagic degradation. In terms of assembly, (Microbial infection) Interacts with S.typhimurium protein SseK3; SseK3 does not glycosylate TRIM32. In terms of processing, ubiquitinated. Post-translationally, phosphorylation at Ser-55 by CHEK2 under oxidative stress, activates the E3 ligase activity and promotes ATG7 ubiquitination leading to positive regulation of the autophagosme assembly. Spleen, thymus, prostate, testis, ovary, intestine, colon and skeletal muscle.

Its subcellular location is the cytoplasm. The protein resides in the mitochondrion. It is found in the endoplasmic reticulum. The enzyme catalyses S-ubiquitinyl-[E2 ubiquitin-conjugating enzyme]-L-cysteine + [acceptor protein]-L-lysine = [E2 ubiquitin-conjugating enzyme]-L-cysteine + N(6)-ubiquitinyl-[acceptor protein]-L-lysine.. The protein operates within protein modification; protein ubiquitination. Its function is as follows. E3 ubiquitin ligase that plays a role in various biological processes including neural stem cell differentiation, innate immunity, inflammatory resonse and autophagy. Plays a role in virus-triggered induction of IFN-beta and TNF-alpha by mediating the ubiquitination of STING1. Mechanistically, targets STING1 for 'Lys-63'-linked ubiquitination which promotes the interaction of STING1 with TBK1. Regulates bacterial clearance and promotes autophagy in Mycobacterium tuberculosis-infected macrophages. Negatively regulates TLR3/4-mediated innate immune and inflammatory response by triggering the autophagic degradation of TICAM1 in an E3 activity-independent manner. Plays an essential role in oxidative stress induced cell death by inducing loss of transmembrane potential and enhancing mitochondrial reactive oxygen species (ROS) production during oxidative stress conditions. Ubiquitinates XIAP and targets it for proteasomal degradation. Ubiquitinates DTNBP1 (dysbindin) and promotes its degradation. May ubiquitinate BBS2. Ubiquitinates PIAS4/PIASY and promotes its degradation in keratinocytes treated with UVB and TNF-alpha. Also acts as a regulator of autophagy by mediating formation of unanchored 'Lys-63'-linked polyubiquitin chains that activate ULK1: interaction with AMBRA1 is required for ULK1 activation. Positively regulates dendritic branching by promoting ubiquitination and subsequent degradation of the epigenetic factor CDYL. Under metabolic stress and phosphorylation by CHK2, mediates 'Lys-63'-linked ubiquitination of ATG7 at 'Lys-45' to initiate autophagy. Functionally, (Microbial infection) May play a significant role in mediating the biological activity of the HIV-1 Tat protein in vivo. Binds specifically to the activation domain of HIV-1 Tat and can also interact with the HIV-2 and EIAV Tat proteins in vivo. The sequence is that of E3 ubiquitin-protein ligase TRIM32 from Homo sapiens (Human).